Consider the following 658-residue polypeptide: DNA mismatch repair protein MutL (658 aa).

A compositionally biased stretch (basic and acidic residues) spans Arg114–Lys130. The tract at residues Arg114–Ala137 is disordered.

This sequence belongs to the DNA mismatch repair MutL/HexB family.

Its function is as follows. This protein is involved in the repair of mismatches in DNA. It is required for dam-dependent methyl-directed DNA mismatch repair. May act as a 'molecular matchmaker', a protein that promotes the formation of a stable complex between two or more DNA-binding proteins in an ATP-dependent manner without itself being part of a final effector complex. The polypeptide is DNA mismatch repair protein MutL (Neisseria meningitidis serogroup C / serotype 2a (strain ATCC 700532 / DSM 15464 / FAM18)).